Consider the following 387-residue polypeptide: MRPIYLDNNATTRVDAEVLQAMLPFFADVFGNASSMHDAGATAGAAINVARRQLQALIGAKFDPEITFTSGGTESNNAAILSGLEAMPERTEIVTSAVEHPAVLTLCTHLEKTRGTKVHKVPVDHQGRLDLDAYQDALTHRVAIVSIMWANNETGTIFPVVKLAEMAKKVGAIFHTDAVQAIGKLPIDLKSTAIDMLSLSAHKFHGPKGVGALYIKRGVPFHALIKGGHQERDRRAGTENTPGIVGLGKAAELALDCMDKDNAIIRSFRDRLEKGLLERVPQVFVMGDPVTRLPNTTSIAFEGVGGEAMQFLLNRHGIACSSGSACTSRSLSTSHVLKAMGTPHRQAVGAVRFSLSGYNCEEDIDRVLRVIPAVVKKLRESRPVFAG.

Pyridoxal 5'-phosphate is bound by residues 72–73 (GT), Asn152, Gln180, and 200–202 (SAH). At Lys203 the chain carries N6-(pyridoxal phosphate)lysine. Thr238 contacts pyridoxal 5'-phosphate. The active-site Cysteine persulfide intermediate is the Cys326. Cys326 serves as a coordination point for [2Fe-2S] cluster.

This sequence belongs to the class-V pyridoxal-phosphate-dependent aminotransferase family. NifS/IscS subfamily. In terms of assembly, homodimer. Requires pyridoxal 5'-phosphate as cofactor.

The enzyme catalyses (sulfur carrier)-H + L-cysteine = (sulfur carrier)-SH + L-alanine. Catalyzes the removal of elemental sulfur atoms from cysteine to produce alanine. Seems to participate in the biosynthesis of the nitrogenase metalloclusters by providing the inorganic sulfur required for the Fe-S core formation. The sequence is that of Cysteine desulfurase from Sinorhizobium fredii (strain NBRC 101917 / NGR234).